The following is a 719-amino-acid chain: Phosphoribosylformylglycinamidine synthase subunit PurL (719 aa).

Histidine 47 is a catalytic residue. Residues tyrosine 50 and lysine 89 each coordinate ATP. Glutamate 91 contacts Mg(2+). Substrate contacts are provided by residues 92 to 95 and arginine 114; that span reads SHNH. The active-site Proton acceptor is the histidine 93. Aspartate 115 provides a ligand contact to Mg(2+). Position 238 (glutamine 238) interacts with substrate. Aspartate 266 lines the Mg(2+) pocket. A substrate-binding site is contributed by 310-312; the sequence is ESQ. ATP is bound by residues aspartate 488 and glycine 525. Asparagine 526 provides a ligand contact to Mg(2+). A substrate-binding site is contributed by serine 528.

Belongs to the FGAMS family. Monomer. Part of the FGAM synthase complex composed of 1 PurL, 1 PurQ and 2 PurS subunits.

The protein resides in the cytoplasm. The catalysed reaction is N(2)-formyl-N(1)-(5-phospho-beta-D-ribosyl)glycinamide + L-glutamine + ATP + H2O = 2-formamido-N(1)-(5-O-phospho-beta-D-ribosyl)acetamidine + L-glutamate + ADP + phosphate + H(+). The protein operates within purine metabolism; IMP biosynthesis via de novo pathway; 5-amino-1-(5-phospho-D-ribosyl)imidazole from N(2)-formyl-N(1)-(5-phospho-D-ribosyl)glycinamide: step 1/2. Functionally, part of the phosphoribosylformylglycinamidine synthase complex involved in the purines biosynthetic pathway. Catalyzes the ATP-dependent conversion of formylglycinamide ribonucleotide (FGAR) and glutamine to yield formylglycinamidine ribonucleotide (FGAM) and glutamate. The FGAM synthase complex is composed of three subunits. PurQ produces an ammonia molecule by converting glutamine to glutamate. PurL transfers the ammonia molecule to FGAR to form FGAM in an ATP-dependent manner. PurS interacts with PurQ and PurL and is thought to assist in the transfer of the ammonia molecule from PurQ to PurL. This chain is Phosphoribosylformylglycinamidine synthase subunit PurL, found in Roseobacter denitrificans (strain ATCC 33942 / OCh 114) (Erythrobacter sp. (strain OCh 114)).